Consider the following 492-residue polypeptide: E1B 55 kDa protein (492 aa).

The segment at 22 to 112 (ENMEGSQDED…ERNPSGNNSR (91 aa)) is disordered. A compositionally biased stretch (low complexity) spans 34 to 44 (RLLASAASGSS). Phosphoserine is present on residues S486 and S487. The residue at position 491 (T491) is a Phosphothreonine.

The protein belongs to the adenoviridae E1B 55 kDa protein family. In terms of assembly, interacts with host PML-4 and PML-5; this interaction promotes efficient subnuclear targeting of E1B-55K to PML nuclear bodies. Interacts with E4-ORF3 protein. Interacts with E4-ORF6 protein.

Its subcellular location is the host nucleus. It is found in the host cytoplasm. Plays a major role to prevent cellular inhibition of viral genome replication. Assembles an SCF-like E3 ubiquitin ligase complex based on the cellular proteins ELOB, ELOC, CUL5 and RBX1, in cooperation with viral E4orf6. This viral RING-type ligase ubiquitinates cellular substrates and targets them to proteasomal degradation: TP53/p53, LIG4, MRE11-RAD50-NBS1 (MRN) complex, ITGA3, DAXX and BLM. E1B-55K probably acts as the substrate-specific adapter of the SCF-like E3 ubiquitin ligase complex. Degradation of host TP53/p53 activity is essential for preventing E1A-induced TP53 accumulation that would otherwise lead to cell apoptosis and growth arrest. E1B-55K also inactivates TP53 transcription-factor activity by binding its transactivation domain. E1B-55K also functions as a SUMO1 E3 ligase for TP53 which causes the latter to be sequestered in promyelocytic leukemia (PML) nuclear bodies thereby contributing to maximal inhibition of TP53 function. The protein is E1B 55 kDa protein of Human adenovirus B serotype 7 (HAdV-7).